A 417-amino-acid polypeptide reads, in one-letter code: Imidazolonepropionase (417 aa).

Residues histidine 80 and histidine 82 each coordinate Fe(3+). Zn(2+)-binding residues include histidine 80 and histidine 82. The 4-imidazolone-5-propanoate site is built by arginine 89, tyrosine 152, and histidine 187. Tyrosine 152 is an N-formimidoyl-L-glutamate binding site. Histidine 252 is a Fe(3+) binding site. Zn(2+) is bound at residue histidine 252. Glutamate 255 is a 4-imidazolone-5-propanoate binding site. Aspartate 326 contacts Fe(3+). Aspartate 326 serves as a coordination point for Zn(2+). N-formimidoyl-L-glutamate contacts are provided by asparagine 328 and glycine 330. Serine 331 is a binding site for 4-imidazolone-5-propanoate.

This sequence belongs to the metallo-dependent hydrolases superfamily. HutI family. It depends on Zn(2+) as a cofactor. Requires Fe(3+) as cofactor.

The protein resides in the cytoplasm. The enzyme catalyses 4-imidazolone-5-propanoate + H2O = N-formimidoyl-L-glutamate. It participates in amino-acid degradation; L-histidine degradation into L-glutamate; N-formimidoyl-L-glutamate from L-histidine: step 3/3. Functionally, catalyzes the hydrolytic cleavage of the carbon-nitrogen bond in imidazolone-5-propanoate to yield N-formimidoyl-L-glutamate. It is the third step in the universal histidine degradation pathway. This Bacteroides fragilis (strain ATCC 25285 / DSM 2151 / CCUG 4856 / JCM 11019 / LMG 10263 / NCTC 9343 / Onslow / VPI 2553 / EN-2) protein is Imidazolonepropionase.